We begin with the raw amino-acid sequence, 443 residues long: Chromosomal replication initiator protein DnaA (443 aa).

Positions 1–67 are domain I, interacts with DnaA modulators; it reads MDAWSRSLER…RELLAHFAGF (67 aa). The interval 67–105 is domain II; sequence FSDVFLEIGSRPRPVEAQNAPFSTPSAHVSSEPQVPFAG. The interval 106–323 is domain III, AAA+ region; sequence NLDNHYTFAN…GALNTLTARA (218 aa). ATP is bound by residues G151, G153, K154, and T155. The tract at residues 324–443 is domain IV, binds dsDNA; the sequence is NFTGRAITTE…WDKLIRKLSE (120 aa).

The protein belongs to the DnaA family. In terms of assembly, oligomerizes as a right-handed, spiral filament on DNA at oriC.

It localises to the cytoplasm. Its function is as follows. Plays an essential role in the initiation and regulation of chromosomal replication. ATP-DnaA binds to the origin of replication (oriC) to initiate formation of the DNA replication initiation complex once per cell cycle. Binds the DnaA box (a 9 base pair repeat at the origin) and separates the double-stranded (ds)DNA. Forms a right-handed helical filament on oriC DNA; dsDNA binds to the exterior of the filament while single-stranded (ss)DNA is stabiized in the filament's interior. The ATP-DnaA-oriC complex binds and stabilizes one strand of the AT-rich DNA unwinding element (DUE), permitting loading of DNA polymerase. After initiation quickly degrades to an ADP-DnaA complex that is not apt for DNA replication. Binds acidic phospholipids. The chain is Chromosomal replication initiator protein DnaA from Stenotrophomonas maltophilia (strain R551-3).